The sequence spans 1379 residues: Hepatocyte growth factor receptor (1379 aa).

The signal sequence occupies residues 1–24 (MKAPTVLAPGILVLLLSLVQRSHG). The Extracellular segment spans residues 25–931 (ECKEALVKSE…VIVQPDQNFA (907 aa)). The region spanning 27 to 514 (KEALVKSEMN…TGKKITKIPL (488 aa)) is the Sema domain. Residue asparagine 45 is glycosylated (N-linked (GlcNAc...) asparagine). 4 cysteine pairs are disulfide-bonded: cysteine 95/cysteine 101, cysteine 98/cysteine 160, cysteine 133/cysteine 141, and cysteine 171/cysteine 174. Asparagine 106 is a glycosylation site (N-linked (GlcNAc...) asparagine). Asparagine 201 and asparagine 357 each carry an N-linked (GlcNAc...) asparagine glycan. Cystine bridges form between cysteine 297/cysteine 362 and cysteine 384/cysteine 396. N-linked (GlcNAc...) asparagine glycans are attached at residues asparagine 398 and asparagine 404. 4 disulfides stabilise this stretch: cysteine 519–cysteine 537, cysteine 525–cysteine 560, cysteine 528–cysteine 544, and cysteine 540–cysteine 550. 3 consecutive IPT/TIG domains span residues 562–654 (PAVY…FSYV), 656–738 (PVIT…FSYR), and 741–835 (PVVY…LTYV). The O-linked (Man) threonine glycan is linked to threonine 581. Residues asparagine 606 and asparagine 634 are each glycosylated (N-linked (GlcNAc...) asparagine). Threonine 675 and threonine 760 each carry an O-linked (Man) threonine glycan. Residues asparagine 784 and asparagine 878 are each glycosylated (N-linked (GlcNAc...) asparagine). A helical membrane pass occupies residues 932–954 (GLIIGAVSISVVVLLLSGLFLWM). Residues 955-1379 (RKRKHKDLGS…QDNIDGEGNT (425 aa)) are Cytoplasmic-facing. Phosphoserine is present on serine 964. A Phosphothreonine modification is found at threonine 975. Residues serine 988, serine 995, and serine 998 each carry the phosphoserine modification. Tyrosine 1001 is subject to Phosphotyrosine. One can recognise a Protein kinase domain in the interval 1076–1343 (VHFNEVIGRG…RISSIFSTFI (268 aa)). ATP contacts are provided by residues 1082 to 1090 (IGRGHFGCV) and lysine 1108. Catalysis depends on aspartate 1202, which acts as the Proton acceptor. The tract at residues 1210–1379 (LDEKFTVKVA…QDNIDGEGNT (170 aa)) is interaction with RANBP9. Tyrosine 1228 is modified (phosphotyrosine). Tyrosine 1232 and tyrosine 1233 each carry phosphotyrosine; by autocatalysis. Threonine 1287 is subject to Phosphothreonine. An interaction with MUC20 region spans residues 1318–1357 (WHPKAEMRPSFSELVSRISSIFSTFIGEHYVHVNATYVNV). A phosphotyrosine; by autocatalysis mark is found at tyrosine 1347 and tyrosine 1354. Tyrosine 1363 carries the post-translational modification Phosphotyrosine.

It belongs to the protein kinase superfamily. Tyr protein kinase family. In terms of assembly, heterodimer made of an alpha chain (50 kDa) and a beta chain (145 kDa) which are disulfide linked. Binds PLXNB1. Interacts when phosphorylated with downstream effectors including STAT3, PIK3R1, SRC, PCLG1, GRB2 and GAB1. When phosphorylated at Tyr-1354, interacts with INPPL1/SHIP2. Interacts with RANBP9 and RANBP10. Interacts with INPP5D/SHIP1. Interacts with SPSB1, SPSB2, SPSB4 and probably SPSB3. SPSB1 binding occurs in the presence and in the absence of HGF, however HGF treatment has a positive effect on this interaction. Interacts with MUC20; prevents interaction with GRB2 and suppresses hepatocyte growth factor-induced cell proliferation. Interacts with GRB10. Interacts with PTPN1 and PTPN2. Interacts with HSP90AA1 and HSP90AB1; the interaction suppresses MET kinase activity. Interacts with tensin TNS3. Interacts (when phosphorylated) with tensin TNS4 (via SH2 domain); the interaction increases MET protein stability by inhibiting MET endocytosis and subsequent lysosomal degradation. As to quaternary structure, (Microbial infection) Interacts with L.monocytogenes InlB. InlB probably dimerizes upon binding to MET, which encourages subsequent dimerization of MET. Post-translationally, autophosphorylated in response to ligand binding on Tyr-1232 and Tyr-1233 in the kinase domain leading to further phosphorylation of Tyr-1347 and Tyr-1354 in the C-terminal multifunctional docking site. Dephosphorylated by PTPRJ at Tyr-1347 and Tyr-1363. Dephosphorylated by PTPN1 and PTPN2. In terms of processing, ubiquitinated. Ubiquitination by CBL regulates MET endocytosis, resulting in decreasing plasma membrane receptor abundance, and in endosomal degradation and/or recycling of internalized receptors. O-mannosylation of IPT/TIG domains by TMEM260 is required for protein maturation. O-mannosylated residues are composed of single mannose glycans that are not elongated or modified. Post-translationally, (Microbial infection) Tyrosine phosphorylation is stimulated by L.monocytogenes InlB.

The protein localises to the membrane. It catalyses the reaction L-tyrosyl-[protein] + ATP = O-phospho-L-tyrosyl-[protein] + ADP + H(+). In its inactive state, the C-terminal tail interacts with the catalytic domain and inhibits the kinase activity. Upon ligand binding, the C-terminal tail is displaced and becomes phosphorylated, thus increasing the kinase activity. In terms of biological role, receptor tyrosine kinase that transduces signals from the extracellular matrix into the cytoplasm by binding to hepatocyte growth factor/HGF ligand. Regulates many physiological processes including proliferation, scattering, morphogenesis and survival. Ligand binding at the cell surface induces autophosphorylation of MET on its intracellular domain that provides docking sites for downstream signaling molecules. Following activation by ligand, interacts with the PI3-kinase subunit PIK3R1, PLCG1, SRC, GRB2, STAT3 or the adapter GAB1. Recruitment of these downstream effectors by MET leads to the activation of several signaling cascades including the RAS-ERK, PI3 kinase-AKT, or PLCgamma-PKC. The RAS-ERK activation is associated with the morphogenetic effects while PI3K/AKT coordinates prosurvival effects. During embryonic development, MET signaling plays a role in gastrulation, development and migration of neuronal precursors, angiogenesis and kidney formation. During skeletal muscle development, it is crucial for the migration of muscle progenitor cells and for the proliferation of secondary myoblasts. In adults, participates in wound healing as well as organ regeneration and tissue remodeling. Also promotes differentiation and proliferation of hematopoietic cells. May regulate cortical bone osteogenesis. Functionally, (Microbial infection) Acts as a receptor for Listeria monocytogenes internalin InlB, mediating entry of the pathogen into cells. This is Hepatocyte growth factor receptor (Met) from Mus musculus (Mouse).